Here is a 222-residue protein sequence, read N- to C-terminus: 2-hydroxy-3-keto-5-methylthiopentenyl-1-phosphate phosphatase (222 aa).

Belongs to the HAD-like hydrolase superfamily. MtnX family.

The catalysed reaction is 2-hydroxy-5-methylsulfanyl-3-oxopent-1-enyl phosphate + H2O = 1,2-dihydroxy-5-(methylsulfanyl)pent-1-en-3-one + phosphate. It functions in the pathway amino-acid biosynthesis; L-methionine biosynthesis via salvage pathway; L-methionine from S-methyl-5-thio-alpha-D-ribose 1-phosphate: step 4/6. Dephosphorylates 2-hydroxy-3-keto-5-methylthiopentenyl-1-phosphate (HK-MTPenyl-1-P) yielding 1,2-dihydroxy-3-keto-5-methylthiopentene (DHK-MTPene). The sequence is that of 2-hydroxy-3-keto-5-methylthiopentenyl-1-phosphate phosphatase from Brevibacillus brevis (strain 47 / JCM 6285 / NBRC 100599).